The sequence spans 246 residues: NH(3)-dependent NAD(+) synthetase (246 aa).

Position 29-36 (29-36 (GLSGGIDS)) interacts with ATP. Residue Asp-35 coordinates Mg(2+). Position 110 (Arg-110) interacts with deamido-NAD(+). Residue Thr-130 coordinates ATP. Glu-135 serves as a coordination point for Mg(2+). Lys-159 and Ser-181 together coordinate ATP.

It belongs to the NAD synthetase family. In terms of assembly, homodimer.

The enzyme catalyses deamido-NAD(+) + NH4(+) + ATP = AMP + diphosphate + NAD(+) + H(+). Its pathway is cofactor biosynthesis; NAD(+) biosynthesis; NAD(+) from deamido-NAD(+) (ammonia route): step 1/1. Catalyzes the ATP-dependent amidation of deamido-NAD to form NAD. Uses ammonia as a nitrogen source. The chain is NH(3)-dependent NAD(+) synthetase from Campylobacter jejuni subsp. jejuni serotype O:23/36 (strain 81-176).